The primary structure comprises 341 residues: tRNA N6-adenosine threonylcarbamoyltransferase (341 aa).

Fe cation-binding residues include H111 and H115. Substrate contacts are provided by residues 134–138 (LVSGG), D167, G180, and N276. D304 is a Fe cation binding site.

Belongs to the KAE1 / TsaD family. The cofactor is Fe(2+).

It is found in the cytoplasm. It carries out the reaction L-threonylcarbamoyladenylate + adenosine(37) in tRNA = N(6)-L-threonylcarbamoyladenosine(37) in tRNA + AMP + H(+). In terms of biological role, required for the formation of a threonylcarbamoyl group on adenosine at position 37 (t(6)A37) in tRNAs that read codons beginning with adenine. Is involved in the transfer of the threonylcarbamoyl moiety of threonylcarbamoyl-AMP (TC-AMP) to the N6 group of A37, together with TsaE and TsaB. TsaD likely plays a direct catalytic role in this reaction. This Pseudomonas fluorescens (strain Pf0-1) protein is tRNA N6-adenosine threonylcarbamoyltransferase.